The chain runs to 307 residues: NAD kinase (307 aa).

The active-site Proton acceptor is the Asp-80. Residues 80–81 (DG), His-85, 154–155 (ND), His-165, His-182, Asp-184, 195–200 (TAYALS), and Gln-254 contribute to the NAD(+) site.

It belongs to the NAD kinase family. A divalent metal cation is required as a cofactor.

The protein resides in the cytoplasm. It carries out the reaction NAD(+) + ATP = ADP + NADP(+) + H(+). Involved in the regulation of the intracellular balance of NAD and NADP, and is a key enzyme in the biosynthesis of NADP. Catalyzes specifically the phosphorylation on 2'-hydroxyl of the adenosine moiety of NAD to yield NADP. In Acinetobacter baylyi (strain ATCC 33305 / BD413 / ADP1), this protein is NAD kinase.